A 272-amino-acid polypeptide reads, in one-letter code: Orotidine 5'-phosphate decarboxylase (272 aa).

Lysine 92 functions as the Proton donor in the catalytic mechanism.

It belongs to the OMP decarboxylase family. Type 2 subfamily.

The catalysed reaction is orotidine 5'-phosphate + H(+) = UMP + CO2. It participates in pyrimidine metabolism; UMP biosynthesis via de novo pathway; UMP from orotate: step 2/2. In Deinococcus radiodurans (strain ATCC 13939 / DSM 20539 / JCM 16871 / CCUG 27074 / LMG 4051 / NBRC 15346 / NCIMB 9279 / VKM B-1422 / R1), this protein is Orotidine 5'-phosphate decarboxylase (pyrF).